The sequence spans 53 residues: ATP synthase protein 8 (53 aa).

The helical transmembrane segment at 4 to 24 (MAPISWLLLFIIFSITFILFC) threads the bilayer.

The protein belongs to the ATPase protein 8 family. F-type ATPases have 2 components, CF(1) - the catalytic core - and CF(0) - the membrane proton channel.

The protein localises to the mitochondrion membrane. Mitochondrial membrane ATP synthase (F(1)F(0) ATP synthase or Complex V) produces ATP from ADP in the presence of a proton gradient across the membrane which is generated by electron transport complexes of the respiratory chain. F-type ATPases consist of two structural domains, F(1) - containing the extramembraneous catalytic core and F(0) - containing the membrane proton channel, linked together by a central stalk and a peripheral stalk. During catalysis, ATP synthesis in the catalytic domain of F(1) is coupled via a rotary mechanism of the central stalk subunits to proton translocation. Part of the complex F(0) domain. Minor subunit located with subunit a in the membrane. The chain is ATP synthase protein 8 (mt:ATPase8) from Drosophila mauritiana (Fruit fly).